The chain runs to 101 residues: NADH-ubiquinone oxidoreductase chain 5 (101 aa).

3 consecutive transmembrane segments (helical) span residues 12-32 (IALFTVFIIDIIKFYILSGVI), 48-68 (FLFITMGFLFFIFTTWYFICF), and 79-99 (LVIYFRYNLKYCLFFCMLFII).

This sequence belongs to the complex I subunit 5 family.

The protein resides in the mitochondrion inner membrane. It carries out the reaction a ubiquinone + NADH + 5 H(+)(in) = a ubiquinol + NAD(+) + 4 H(+)(out). Functionally, core subunit of the mitochondrial membrane respiratory chain NADH dehydrogenase (Complex I) that is believed to belong to the minimal assembly required for catalysis. Complex I functions in the transfer of electrons from NADH to the respiratory chain. The immediate electron acceptor for the enzyme is believed to be ubiquinone. This chain is NADH-ubiquinone oxidoreductase chain 5 (ND5), found in Leishmania tarentolae (Sauroleishmania tarentolae).